Reading from the N-terminus, the 859-residue chain is Glucans biosynthesis glucosyltransferase H (859 aa).

Transmembrane regions (helical) follow at residues 144–166 (YILL…GILP), 200–222 (LLLF…MGFL), 523–545 (VMSY…LLAV), 573–595 (VALF…ILIW), 608–630 (VTVS…MLFH), and 684–706 (SFLW…SVIS).

The protein belongs to the glycosyltransferase 2 family. OpgH subfamily.

The protein localises to the cell inner membrane. Its pathway is glycan metabolism; osmoregulated periplasmic glucan (OPG) biosynthesis. Functionally, involved in the biosynthesis of osmoregulated periplasmic glucans (OPGs). The sequence is that of Glucans biosynthesis glucosyltransferase H from Pseudomonas syringae pv. tomato (strain ATCC BAA-871 / DC3000).